The following is a 204-amino-acid chain: Fruiting body protein SC7 (204 aa).

Residues 1 to 16 form the signal peptide; sequence MKLTVILLTAVLAASA. The 124-residue stretch at 62–185 folds into the SCP domain; sequence LKAHNNERAQ…KTLWYYVCNY (124 aa). Residues Asn80, Asn118, and Asn134 are each glycosylated (N-linked (GlcNAc...) asparagine).

This sequence belongs to the CRISP family.

The protein resides in the secreted. In Schizophyllum commune (Split gill fungus), this protein is Fruiting body protein SC7 (SC7).